The chain runs to 842 residues: MPLSYQHFRRILLLDEEAGPLEEELPRLADEDLNRRVAEDLNLQLPNVSIPWTHKVGNFTGLYSSTIPVFNPNWKTPSFPDIHLHQDIINKCEQFVGPLTVNEKRRLNLVMPARFFPISTKYLPLEKGIKPYYPDNVVNHYFQTRHYLHTLWKAGHLYKRETTRSASFCGSPYSWEQELHHGAFLDGPSRMGEEYFHHQSSGIFSRPPVGSSIQSKHQKSRLGPQSQQRPLDGSQQGRSGSLRAGVHSPTRRPFGVEPSGSRHAKNIASRPASCLHQSAVRKAAYPNHSTFERHSSSGHAVELHNISSSSAGSQSKRPVFSCWWLQFRNSEPCSDYCLTHLVNLLEDWGPCTEHGKHHIRIPRTPARVTGGVFLVDKNPHNTAESRLVVDFSQFSRGSSRVSWPKFAVPNLQSLTNLLSSNLSWLSLDVSAAFYHLPLHPAAMPHLLVGSSGLSRYVARLSSNSRIINHQHGTLPNLHDSCSRNLYVSLMLLFKTFGRKLHLYSHPIIMGFRKIPMGVGLSPFLLAQFTSAICSVVRRAFPHCLAFSYMDDVVLGAKSVRHLESLYTSVTNFLLSLGIHLNPNKTKRWGYSLNFMGYVIGSWGSLPQEHIIQKIKHCFGKLPVNRPIDWKVCQGIVGLLGFAAPFTQCGYPALMPLYTCIQSKQAFTFSPTYKAFLCKQYLNLYPVARQRPGLCQVFADATPTGWGLAIGIQRMRGTFVAPLPIHTAELLAACFARSRSGAKLIGTDNSVVLSRKYTSFPWLLGCAANWILRGTSFVYVPSALNPADDPSRGRLGIFRPLLRLRFRPTTGRTSLYAVSPSVPSHLPDRVHFASPLHVAWRPP.

The segment at 1–177 (MPLSYQHFRR…FCGSPYSWEQ (177 aa)) is terminal protein domain (TP). The interval 178–345 (ELHHGAFLDG…YCLTHLVNLL (168 aa)) is spacer. The interval 205–271 (SRPPVGSSIQ…RHAKNIASRP (67 aa)) is disordered. Polar residues predominate over residues 223–239 (GPQSQQRPLDGSQQGRS). The segment at 346-689 (EDWGPCTEHG…YLNLYPVARQ (344 aa)) is polymerase/reverse transcriptase domain (RT). In terms of domain architecture, Reverse transcriptase spans 356–599 (KHHIRIPRTP…YSLNFMGYVI (244 aa)). 3 residues coordinate Mg(2+): Asp-428, Asp-550, and Asp-551.

Belongs to the hepadnaviridae P protein family.

It carries out the reaction DNA(n) + a 2'-deoxyribonucleoside 5'-triphosphate = DNA(n+1) + diphosphate. The enzyme catalyses Endonucleolytic cleavage to 5'-phosphomonoester.. Its activity is regulated as follows. Activated by host HSP70 and HSP40 in vitro to be able to bind the epsilon loop of the pgRNA. Because deletion of the RNase H region renders the protein partly chaperone-independent, the chaperones may be needed indirectly to relieve occlusion of the RNA-binding site by this domain. Inhibited by several reverse-transcriptase inhibitors: Lamivudine, Adefovir and Entecavir. In terms of biological role, multifunctional enzyme that converts the viral RNA genome into dsDNA in viral cytoplasmic capsids. This enzyme displays a DNA polymerase activity that can copy either DNA or RNA templates, and a ribonuclease H (RNase H) activity that cleaves the RNA strand of RNA-DNA heteroduplexes in a partially processive 3'- to 5'-endonucleasic mode. Neo-synthesized pregenomic RNA (pgRNA) are encapsidated together with the P protein, and reverse-transcribed inside the nucleocapsid. Initiation of reverse-transcription occurs first by binding the epsilon loop on the pgRNA genome, and is initiated by protein priming, thereby the 5'-end of (-)DNA is covalently linked to P protein. Partial (+)DNA is synthesized from the (-)DNA template and generates the relaxed circular DNA (RC-DNA) genome. After budding and infection, the RC-DNA migrates in the nucleus, and is converted into a plasmid-like covalently closed circular DNA (cccDNA). The activity of P protein does not seem to be necessary for cccDNA generation, and is presumably released from (+)DNA by host nuclear DNA repair machinery. In Hepatitis B virus genotype E subtype ayw4 (isolate Kou) (HBV-E), this protein is Protein P.